The sequence spans 152 residues: ADP-ribose glycohydrolase OARD1 (152 aa).

A2 bears the N-acetylalanine mark. One can recognise a Macro domain in the interval 2–152 (ASSLNEDPEG…TDIKITVYTL (151 aa)). S4 carries the phosphoserine modification. L21 is a binding site for substrate. Residue K84 is the Nucleophile of the active site. Substrate is bound by residues 119 to 125 (RIGCGLD) and L152. Residue D125 is the Proton acceptor of the active site.

Ubiquitous.

It is found in the nucleus. Its subcellular location is the nucleoplasm. The protein resides in the nucleolus. The protein localises to the chromosome. The catalysed reaction is 2''-O-acetyl-ADP-D-ribose + H2O = ADP-D-ribose + acetate + H(+). The enzyme catalyses 5-O-(ADP-D-ribosyl)-L-glutamyl-[protein] + H2O = L-glutamyl-[protein] + ADP-D-ribose + H(+). It carries out the reaction alpha-NAD(+) + H2O = ADP-D-ribose + nicotinamide + H(+). With respect to regulation, subject to competitive inhibition by the product ADP-ribose. In terms of biological role, ADP-ribose glycohydrolase that hydrolyzes ADP-ribose and acts on different substrates, such as proteins ADP-ribosylated on glutamate and O-acetyl-ADP-D-ribose. Specifically acts as a glutamate mono-ADP-ribosylhydrolase by mediating the removal of mono-ADP-ribose attached to glutamate residues on proteins. Does not act on poly-ADP-ribosylated proteins: the poly-ADP-ribose chain of poly-ADP-ribosylated glutamate residues must by hydrolyzed into mono-ADP-ribosylated glutamate by PARG to become a substrate for OARD1. Deacetylates O-acetyl-ADP ribose, a signaling molecule generated by the deacetylation of acetylated lysine residues in histones and other proteins. Catalyzes the deacylation of O-acetyl-ADP-ribose, O-propionyl-ADP-ribose and O-butyryl-ADP-ribose, yielding ADP-ribose plus acetate, propionate and butyrate, respectively. This chain is ADP-ribose glycohydrolase OARD1, found in Homo sapiens (Human).